The chain runs to 71 residues: Translational regulator CsrA (71 aa).

It belongs to the CsrA/RsmA family. As to quaternary structure, homodimer; the beta-strands of each monomer intercalate to form a hydrophobic core, while the alpha-helices form wings that extend away from the core.

The protein localises to the cytoplasm. A translational regulator that binds mRNA to regulate translation initiation and/or mRNA stability. Usually binds in the 5'-UTR at or near the Shine-Dalgarno sequence preventing ribosome-binding, thus repressing translation. Its main target seems to be the major flagellin gene, while its function is anatagonized by FliW. The polypeptide is Translational regulator CsrA (Clostridium botulinum (strain Alaska E43 / Type E3)).